The sequence spans 105 residues: Nitrogen fixation nifHD region glnB-like protein 1 (105 aa).

Belongs to the P(II) protein family.

Functionally, could be involved in the regulation of nitrogen fixation. In Methanococcus maripaludis (Methanococcus deltae), this protein is Nitrogen fixation nifHD region glnB-like protein 1 (glnBI).